The primary structure comprises 404 residues: Cysteine desulfurase IscS (404 aa).

Residues 75 to 76, asparagine 155, glutamine 183, and 203 to 205 contribute to the pyridoxal 5'-phosphate site; these read AT and TGH. The residue at position 206 (lysine 206) is an N6-(pyridoxal phosphate)lysine. Pyridoxal 5'-phosphate is bound at residue threonine 243. Cysteine 328 (cysteine persulfide intermediate) is an active-site residue. Cysteine 328 is a binding site for [2Fe-2S] cluster.

It belongs to the class-V pyridoxal-phosphate-dependent aminotransferase family. NifS/IscS subfamily. Homodimer. Forms a heterotetramer with IscU, interacts with other sulfur acceptors. The cofactor is pyridoxal 5'-phosphate.

It is found in the cytoplasm. It catalyses the reaction (sulfur carrier)-H + L-cysteine = (sulfur carrier)-SH + L-alanine. It participates in cofactor biosynthesis; iron-sulfur cluster biosynthesis. Functionally, master enzyme that delivers sulfur to a number of partners involved in Fe-S cluster assembly, tRNA modification or cofactor biosynthesis. Catalyzes the removal of elemental sulfur atoms from cysteine to produce alanine. Functions as a sulfur delivery protein for Fe-S cluster synthesis onto IscU, an Fe-S scaffold assembly protein, as well as other S acceptor proteins. In Cronobacter sakazakii (strain ATCC BAA-894) (Enterobacter sakazakii), this protein is Cysteine desulfurase IscS.